A 290-amino-acid chain; its full sequence is MADSTFLAPELSDTESMGEETVRFQELLLKASKELQQAQTARPDSTQIQPKPGFCVKTNSSEGKVFINICHSPSIPPPADVTEDELLQMLEEDQAGFRIPMSLGEPHAELDAKGQGCTAYDVAVNSNFYLRMQNSDFLRELVVTIAREGLEDKYGLQLNPEWRMLKYRSFLGSISQQNIRSQQRPRIQELGTLDASGSLGTCHGPERPHLNLWLEAPDLLLAEVDLPKLDGAQGLALEIGENRLVIGGPQQLYHLDATVPLRINSEASRAAFHRRRKQLMVSMPLLTASS.

S12, S16, and S173 each carry phosphoserine.

Belongs to the PIH1 family. As to quaternary structure, component of the R2TP complex composed at least of RUVBL1, RUVBL2, RPAP3 and PIHD1. Component of the PAQosome complex which is responsible for the biogenesis of several protein complexes and which consists of R2TP complex members RUVBL1, RUVBL2, RPAP3 and PIH1D1, URI complex members PFDN2, PFDN6, PDRG1, UXT and URI1 as well as ASDURF, POLR2E and DNAAF10/WDR92. Interacts with phosphorylated TELO2. Mediates interaction of TELO2 with the R2TP complex. Interacts with phosphorylated ECD, EFTUD2/SNRP116, RPB1 and UBR5 and with RPB1 in a phosphorylation-independent manner. Interacts with the core C/D box snoRNP particle components NOP58 and FBL and with RUVBL1/TIP49. Interacts with RPAP3 and DNAAF10. Interacts with histone H4 and with SWI/SNF complex member SMARCB1/SNF5. Interacts with the mTORC1 complex member RPTOR. Interacts with isoform 1 of MSL1.

Its subcellular location is the nucleus. In terms of biological role, involved in the assembly of C/D box small nucleolar ribonucleoprotein (snoRNP) particles. Recruits the SWI/SNF complex to the core promoter of rRNA genes and enhances pre-rRNA transcription. Mediates interaction of TELO2 with the R2TP complex which is necessary for the stability of MTOR and SMG1. Positively regulates the assembly and activity of the mTORC1 complex. The polypeptide is PIH1 domain-containing protein 1 (Pih1d1) (Mus musculus (Mouse)).